The following is a 302-amino-acid chain: Lipooligosaccharide biosynthesis protein lex-1 (302 aa).

7 tandem repeats follow at residues 42–45, 46–49, 50–53, 54–57, 58–61, 62–65, and 66–69. The interval 42–69 is 7 X 4 AA tandem repeats of S-I-N-Q; it reads SINQSINQSINQSINQSINQSINQSINQ.

Belongs to the glycosyltransferase 25 family.

Its function is as follows. Involved in extracellular lipooligosaccharide (LOS) biosynthesis and virulence expression. Involved in the synthesis of the oligosaccharide moiety of the LOS molecule by adding GalNAc. The protein is Lipooligosaccharide biosynthesis protein lex-1 (lex1) of Haemophilus influenzae (strain ATCC 51907 / DSM 11121 / KW20 / Rd).